Consider the following 882-residue polypeptide: Alanine--tRNA ligase (882 aa).

Zn(2+) contacts are provided by His-571, His-575, Cys-673, and His-677.

The protein belongs to the class-II aminoacyl-tRNA synthetase family. Zn(2+) is required as a cofactor.

It localises to the cytoplasm. It catalyses the reaction tRNA(Ala) + L-alanine + ATP = L-alanyl-tRNA(Ala) + AMP + diphosphate. In terms of biological role, catalyzes the attachment of alanine to tRNA(Ala) in a two-step reaction: alanine is first activated by ATP to form Ala-AMP and then transferred to the acceptor end of tRNA(Ala). Also edits incorrectly charged Ser-tRNA(Ala) and Gly-tRNA(Ala) via its editing domain. The chain is Alanine--tRNA ligase from Desulfotalea psychrophila (strain LSv54 / DSM 12343).